The following is a 42-amino-acid chain: Iota-conotoxin-like R11.1 (42 aa).

4 cysteine pairs are disulfide-bonded: C5-C19, C12-C22, C18-C27, and C21-C36.

It belongs to the conotoxin I1 superfamily. As to expression, expressed by the venom duct.

The protein localises to the secreted. In terms of biological role, iota-conotoxins bind to voltage-gated sodium channels (Nav) and act as agonists by shifting the voltage-dependence of activation to more hyperpolarized levels. Produces general excitatory symptoms. In Conus radiatus (Rayed cone), this protein is Iota-conotoxin-like R11.1.